A 116-amino-acid polypeptide reads, in one-letter code: Large ribosomal subunit protein bL17 (116 aa).

The protein belongs to the bacterial ribosomal protein bL17 family. Part of the 50S ribosomal subunit. Contacts protein L32.

The protein is Large ribosomal subunit protein bL17 of Synechococcus sp. (strain WH7803).